Here is a 174-residue protein sequence, read N- to C-terminus: MAQDIKNEEVEEVQEEEVVETAEETTPEKSELDLANERADEFENKYLRAHAEMQNIQRRANEERQNLQRYRSQDLAKAILPSLDNLERALAVEGLTDDVKKGLGMVQESLIHALKEEGIEEIAADGEFDHNYHMAIQTLPADDEHPVDTIAQVFQKGYKLHDRILRPAMVVVYN.

The disordered stretch occupies residues 1–35; sequence MAQDIKNEEVEEVQEEEVVETAEETTPEKSELDLA. Acidic residues predominate over residues 9–25; it reads EVEEVQEEEVVETAEET. A compositionally biased stretch (basic and acidic residues) spans 26–35; the sequence is TPEKSELDLA.

Belongs to the GrpE family. As to quaternary structure, homodimer.

It is found in the cytoplasm. Its function is as follows. Participates actively in the response to hyperosmotic and heat shock by preventing the aggregation of stress-denatured proteins, in association with DnaK and GrpE. It is the nucleotide exchange factor for DnaK and may function as a thermosensor. Unfolded proteins bind initially to DnaJ; upon interaction with the DnaJ-bound protein, DnaK hydrolyzes its bound ATP, resulting in the formation of a stable complex. GrpE releases ADP from DnaK; ATP binding to DnaK triggers the release of the substrate protein, thus completing the reaction cycle. Several rounds of ATP-dependent interactions between DnaJ, DnaK and GrpE are required for fully efficient folding. The polypeptide is Protein GrpE (Streptococcus pneumoniae (strain ATCC 700669 / Spain 23F-1)).